Consider the following 385-residue polypeptide: Homoserine O-succinyltransferase (385 aa).

The AB hydrolase-1 domain occupies N51–L360. The Nucleophile role is filled by S157. Position 227 (R227) interacts with substrate. Catalysis depends on residues D323 and H356. Substrate is bound at residue D357.

This sequence belongs to the AB hydrolase superfamily. MetX family. As to quaternary structure, homodimer.

It is found in the cytoplasm. It carries out the reaction L-homoserine + succinyl-CoA = O-succinyl-L-homoserine + CoA. It participates in amino-acid biosynthesis; L-methionine biosynthesis via de novo pathway; O-succinyl-L-homoserine from L-homoserine: step 1/1. Functionally, transfers a succinyl group from succinyl-CoA to L-homoserine, forming succinyl-L-homoserine. The protein is Homoserine O-succinyltransferase of Hahella chejuensis (strain KCTC 2396).